Reading from the N-terminus, the 203-residue chain is NAD(P)H dehydrogenase (quinone) (203 aa).

The 192-residue stretch at 3 to 194 folds into the Flavodoxin-like domain; sequence VLIVYYSMYG…AGARFQGRYV (192 aa). FMN contacts are provided by residues 9–14 and 82–84; these read SMYGHI and TRF. Y11 lines the NAD(+) pocket. W102 contributes to the substrate binding site. FMN contacts are provided by residues 117–123 and H138; that span reads SSATQHG.

Belongs to the WrbA family. FMN is required as a cofactor.

The catalysed reaction is a quinone + NADH + H(+) = a quinol + NAD(+). It carries out the reaction a quinone + NADPH + H(+) = a quinol + NADP(+). The chain is NAD(P)H dehydrogenase (quinone) from Geobacter sulfurreducens (strain ATCC 51573 / DSM 12127 / PCA).